The sequence spans 95 residues: Translation initiation factor 1A (95 aa).

Residues 6–80 (SRKNLRMPEE…EKADITWRYE (75 aa)) enclose the S1-like domain.

The protein belongs to the eIF-1A family.

Its function is as follows. Seems to be required for maximal rate of protein biosynthesis. Enhances ribosome dissociation into subunits and stabilizes the binding of the initiator Met-tRNA(I) to 40 S ribosomal subunits. In Haloarcula marismortui (strain ATCC 43049 / DSM 3752 / JCM 8966 / VKM B-1809) (Halobacterium marismortui), this protein is Translation initiation factor 1A.